A 422-amino-acid chain; its full sequence is Adenylosuccinate synthetase (422 aa).

GTP contacts are provided by residues Gly12–Lys18 and Gly40–Thr42. The active-site Proton acceptor is the Asp13. Positions 13 and 40 each coordinate Mg(2+). IMP is bound by residues Asp13 to Lys16, Asn38 to His41, Thr129, Arg143, Asn221, Thr236, and Arg300. His41 (proton donor) is an active-site residue. Val296–Arg302 is a substrate binding site. Residues Arg302, Lys328–Asp330, and Gly410–Gly412 contribute to the GTP site.

The protein belongs to the adenylosuccinate synthetase family. As to quaternary structure, homodimer. Mg(2+) serves as cofactor.

The protein resides in the cytoplasm. The enzyme catalyses IMP + L-aspartate + GTP = N(6)-(1,2-dicarboxyethyl)-AMP + GDP + phosphate + 2 H(+). The protein operates within purine metabolism; AMP biosynthesis via de novo pathway; AMP from IMP: step 1/2. Its function is as follows. Plays an important role in the de novo pathway and in the salvage pathway of purine nucleotide biosynthesis. Catalyzes the first committed step in the biosynthesis of AMP from IMP. The sequence is that of Adenylosuccinate synthetase from Pyrenophora tritici-repentis (strain Pt-1C-BFP) (Wheat tan spot fungus).